Consider the following 431-residue polypeptide: Adenylosuccinate synthetase (431 aa).

Residues 12 to 18 (GDEGKGK) and 40 to 42 (GHT) each bind GTP. The Proton acceptor role is filled by Asp13. Mg(2+) contacts are provided by Asp13 and Gly40. IMP is bound by residues 13–16 (DEGK), 38–41 (NAGH), Thr129, Arg143, Gln224, Thr239, and Arg303. His41 serves as the catalytic Proton donor. 299 to 305 (VTTGRAR) is a binding site for substrate. GTP contacts are provided by residues Arg305, 331–333 (KLD), and 413–415 (GVG).

Belongs to the adenylosuccinate synthetase family. Homodimer. The cofactor is Mg(2+).

The protein resides in the cytoplasm. The enzyme catalyses IMP + L-aspartate + GTP = N(6)-(1,2-dicarboxyethyl)-AMP + GDP + phosphate + 2 H(+). It participates in purine metabolism; AMP biosynthesis via de novo pathway; AMP from IMP: step 1/2. In terms of biological role, plays an important role in the de novo pathway of purine nucleotide biosynthesis. Catalyzes the first committed step in the biosynthesis of AMP from IMP. This Mycobacterium sp. (strain KMS) protein is Adenylosuccinate synthetase.